Reading from the N-terminus, the 137-residue chain is Large-conductance mechanosensitive channel (137 aa).

A run of 2 helical transmembrane segments spans residues 10–30 (FAMR…AAFG) and 76–96 (GTFI…FSAV).

The protein belongs to the MscL family. Homopentamer.

The protein localises to the cell inner membrane. Channel that opens in response to stretch forces in the membrane lipid bilayer. May participate in the regulation of osmotic pressure changes within the cell. The sequence is that of Large-conductance mechanosensitive channel from Yersinia pseudotuberculosis serotype O:1b (strain IP 31758).